Here is a 324-residue protein sequence, read N- to C-terminus: Galectin-4 (324 aa).

Galectin domains follow at residues 19–150 and 196–324; these read YKRP…INFL and YVGT…YVQI. 257-263 serves as a coordination point for a beta-D-galactoside; sequence WGSEERK. Ser-259 bears the Phosphoserine mark.

As to quaternary structure, monomer. In terms of tissue distribution, highly expressed in full-length form in small and large intestine and stomach but was not detected in other tissues including lung, liver, kidney and spleen.

Galectin that binds lactose and a related range of sugars. The chain is Galectin-4 (Lgals4) from Rattus norvegicus (Rat).